The following is a 333-amino-acid chain: Glycerol-3-phosphate dehydrogenase [NAD(P)+] (333 aa).

Residues Trp-15 and Lys-108 each contribute to the NADPH site. Sn-glycerol 3-phosphate contacts are provided by Lys-108, Gly-136, and Ser-138. Ala-140 lines the NADPH pocket. Sn-glycerol 3-phosphate is bound by residues Lys-191, Asp-244, Ser-254, Arg-255, and Asn-256. The Proton acceptor role is filled by Lys-191. Arg-255 is a binding site for NADPH. 2 residues coordinate NADPH: Val-279 and Glu-281.

It belongs to the NAD-dependent glycerol-3-phosphate dehydrogenase family.

The protein resides in the cytoplasm. The enzyme catalyses sn-glycerol 3-phosphate + NAD(+) = dihydroxyacetone phosphate + NADH + H(+). It catalyses the reaction sn-glycerol 3-phosphate + NADP(+) = dihydroxyacetone phosphate + NADPH + H(+). It participates in membrane lipid metabolism; glycerophospholipid metabolism. In terms of biological role, catalyzes the reduction of the glycolytic intermediate dihydroxyacetone phosphate (DHAP) to sn-glycerol 3-phosphate (G3P), the key precursor for phospholipid synthesis. This chain is Glycerol-3-phosphate dehydrogenase [NAD(P)+], found in Maricaulis maris (strain MCS10) (Caulobacter maris).